Consider the following 250-residue polypeptide: Global transcriptional regulator CodY (250 aa).

Positions 1-146 (MTLLEKTRKL…GATVVGLEIL (146 aa)) are GAF domain. A DNA-binding region (H-T-H motif) is located at residues 194–213 (ASKIADKVGITRSVIVNALR).

The protein belongs to the CodY family.

The protein localises to the cytoplasm. Its function is as follows. DNA-binding global transcriptional regulator which is involved in the adaptive response to starvation and acts by directly or indirectly controlling the expression of numerous genes in response to nutrient availability. During rapid exponential growth, CodY is highly active and represses genes whose products allow adaptation to nutrient depletion. This Caldanaerobacter subterraneus subsp. tengcongensis (strain DSM 15242 / JCM 11007 / NBRC 100824 / MB4) (Thermoanaerobacter tengcongensis) protein is Global transcriptional regulator CodY.